The sequence spans 206 residues: Octanoyltransferase (206 aa).

Residues 30–206 form the BPL/LPL catalytic domain; that stretch reads PETNDEIWLV…EFVTLLNNSI (177 aa). Substrate-binding positions include 69–76, 137–139, and 150–152; these read RGGQVTYH, SLG, and GIA. Catalysis depends on Cys168, which acts as the Acyl-thioester intermediate.

The protein belongs to the LipB family.

The protein resides in the cytoplasm. The enzyme catalyses octanoyl-[ACP] + L-lysyl-[protein] = N(6)-octanoyl-L-lysyl-[protein] + holo-[ACP] + H(+). It functions in the pathway protein modification; protein lipoylation via endogenous pathway; protein N(6)-(lipoyl)lysine from octanoyl-[acyl-carrier-protein]: step 1/2. Its function is as follows. Catalyzes the transfer of endogenously produced octanoic acid from octanoyl-acyl-carrier-protein onto the lipoyl domains of lipoate-dependent enzymes. Lipoyl-ACP can also act as a substrate although octanoyl-ACP is likely to be the physiological substrate. The sequence is that of Octanoyltransferase from Francisella tularensis subsp. holarctica (strain FTNF002-00 / FTA).